The chain runs to 238 residues: Adapter protein MecA (238 aa).

The disordered stretch occupies residues 108-133 (EDENEESVQGNQQQRRSHASDHSKRA).

It belongs to the MecA family. Homodimer.

Enables the recognition and targeting of unfolded and aggregated proteins to the ClpC protease or to other proteins involved in proteolysis. This is Adapter protein MecA from Staphylococcus carnosus (strain TM300).